The chain runs to 561 residues: Putative transport protein Ent638_1362 (561 aa).

A run of 5 helical transmembrane segments spans residues Leu-8–Gly-28, Leu-32–Gln-52, Phe-66–Phe-86, Met-94–Phe-114, and His-158–Ala-178. 2 consecutive RCK C-terminal domains span residues Leu-202–Asn-288 and Val-292–Phe-373. 5 helical membrane-spanning segments follow: residues Leu-383–Phe-403, Phe-406–Leu-426, Phe-447–Ser-467, Met-475–Ala-495, and Ala-540–Leu-560.

This sequence belongs to the AAE transporter (TC 2.A.81) family. YbjL subfamily.

It localises to the cell membrane. The chain is Putative transport protein Ent638_1362 from Enterobacter sp. (strain 638).